Here is a 476-residue protein sequence, read N- to C-terminus: Glycogen synthase (476 aa).

Residue K15 coordinates ADP-alpha-D-glucose.

The protein belongs to the glycosyltransferase 1 family. Bacterial/plant glycogen synthase subfamily.

The enzyme catalyses [(1-&gt;4)-alpha-D-glucosyl](n) + ADP-alpha-D-glucose = [(1-&gt;4)-alpha-D-glucosyl](n+1) + ADP + H(+). It functions in the pathway glycan biosynthesis; glycogen biosynthesis. Its function is as follows. Synthesizes alpha-1,4-glucan chains using ADP-glucose. The chain is Glycogen synthase from Halalkalibacterium halodurans (strain ATCC BAA-125 / DSM 18197 / FERM 7344 / JCM 9153 / C-125) (Bacillus halodurans).